The chain runs to 648 residues: Transcription termination factor FttA (648 aa).

A not required for dimerization, required for cleavage at some sites region spans residues 1–179 (MIKRETQVDQ…QVGRNIYRKP (179 aa)). The KHa stretch occupies residues 9 to 76 (DQILKDIRGI…ISIRPDPDVL (68 aa)). Residues 77–144 (LPPEEAEKLI…WAPKVVRTPP (68 aa)) are KHb. The metallo-beta-lactamase N-terminus stretch occupies residues 185 to 395 (WIRITGLGGF…LVMESTYGGA (211 aa)). 6 residues coordinate Zn(2+): histidine 253, histidine 255, aspartate 257, histidine 258, histidine 341, and aspartate 364. Residues 396–589 (NDIQMPREEA…MEVHTIDGFS (194 aa)) form a beta-Casp region. Positions 590-648 (GHADRRELMNYVAKVRPRPERVITVHGEPQKCLDLATSIHRKFGLSTRAPNNLDTIRLR) are metallo-beta-lactamase C-terminus. Histidine 615 contacts Zn(2+).

It belongs to the metallo-beta-lactamase superfamily. RNA-metabolizing metallo-beta-lactamase-like family. FttA subfamily. In terms of assembly, homodimer. Interacts with RNA polymerase (RNAP), interacts with the Spt4-Spt5 complex. It depends on Zn(2+) as a cofactor.

Its activity is regulated as follows. EndoRNase activity is inhibited by 1,10-phenanthroline. Its function is as follows. Terminates transcription on the whole genome. Termination is linked to FttA-mediated RNA cleavage and does not require NTP hydrolysis. Cleaves endonucleolytically at the RNA exit channel of RNA polymerase (RNAP); the 5'-3' exonuclease activity of this protein degrades the nascent RNA released from RNAP. A single-stranded endoribonuclease (endoRNase) with a preference for cleavage at CA dinucleotides. Has 5'-3' exoribonuclease (exoRNase) activity on 5'-monophosphorylated RNA; this activity does not occur on 5'-tri-phosphorylated or 5'-OH substrates. Also has weak activity 5'-3' exodeoxyribonuclease activity on ssDNA. The protein is Transcription termination factor FttA of Pyrococcus abyssi (strain GE5 / Orsay).